Consider the following 104-residue polypeptide: Synaptic plasticity regulator PANTS (104 aa).

The segment at 58–104 (RRSAEAQADSLPPGPEGEPRVAGAGPNAVTGILTRNQGTERPHGDTR) is disordered. Over residues 95-104 (GTERPHGDTR) the composition is skewed to basic and acidic residues.

Belongs to the UPF0545 family. Interacts with RTN4 isoform A/Nogo-A; the interaction results in enhanced RTN4-mediated inhibition of AMPA receptor clustering. Also interacts with NCAM1, RANBP2 and CCT8. Post-translationally, rapidly degraded by proteolysis following neuronal stimulation, resulting in increased AMPA receptor clustering.

It is found in the synapse. The protein resides in the synaptic cleft. Its function is as follows. Negatively regulates long-term potentiation and modulates adult synaptic plasticity. Stabilizes the interaction of RTN4 isoform A/Nogo-A with its receptors, inhibiting clustering of postsynaptic AMPA receptors at synaptic sites. Upon neuronal stimulation, degraded at synapses, reducing RTN4 signaling and allowing AMPA receptor clustering at individual synapses. The polypeptide is Synaptic plasticity regulator PANTS (Bos taurus (Bovine)).